The primary structure comprises 150 residues: 3-dehydroquinate dehydratase (150 aa).

Tyrosine 26 acts as the Proton acceptor in catalysis. 3 residues coordinate substrate: asparagine 77, histidine 83, and aspartate 90. Histidine 103 functions as the Proton donor in the catalytic mechanism. Residues 104–105 (LS) and arginine 114 each bind substrate.

This sequence belongs to the type-II 3-dehydroquinase family. In terms of assembly, homododecamer.

The catalysed reaction is 3-dehydroquinate = 3-dehydroshikimate + H2O. Its pathway is metabolic intermediate biosynthesis; chorismate biosynthesis; chorismate from D-erythrose 4-phosphate and phosphoenolpyruvate: step 3/7. Catalyzes a trans-dehydration via an enolate intermediate. This is 3-dehydroquinate dehydratase from Klebsiella pneumoniae (strain 342).